Consider the following 262-residue polypeptide: Dehydrin COR410 (262 aa).

2 disordered regions span residues 1–153 (MEDE…HDTD) and 187–262 (LPGG…KPSA). Composition is skewed to basic and acidic residues over residues 34-45 (KKAEEDKEKEEE) and 53-74 (VSVE…KETL). Over residues 89 to 101 (SDEEEEEVIDDNG) the composition is skewed to acidic residues. Tandem repeats lie at residues 106–126 (RKKK…HKDT) and 173–193 (EEEK…GHKK). A 3 X 21 AA repeats, Lys-rich region spans residues 106 to 245 (RKKKKGLKEK…MDKLPGYHKT (140 aa)). 2 stretches are compositionally biased toward basic and acidic residues: residues 113–130 (KEKL…EGEH) and 187–196 (LPGGHKKPED). Residues 197–209 (AAAVPVTHAAPAP) show a composition bias toward low complexity. The stretch at 225–245 (AKEKKGLLGKIMDKLPGYHKT) is repeat 3. Over residues 244–262 (KTGEEDKAAAATGEHKPSA) the composition is skewed to basic and acidic residues.

In terms of tissue distribution, expressed in roots, crown and leaves during cold acclimation.

The polypeptide is Dehydrin COR410 (COR410) (Triticum aestivum (Wheat)).